Consider the following 489-residue polypeptide: Adenylosuccinate synthetase 2, chloroplastic (489 aa).

The N-terminal 54 residues, 1–54 (MPLASLSLDPAPFPLIRPAAGWSGRVLPVPGPAPRLCRPLRAAPVAPATTDEPS), are a transit peptide targeting the chloroplast. GTP contacts are provided by residues 76 to 82 (GDEGKGK) and 104 to 106 (GHT). Catalysis depends on aspartate 77, which acts as the Proton acceptor. Mg(2+)-binding residues include aspartate 77 and glycine 104. IMP is bound by residues 77–80 (DEGK), 102–105 (NAGH), threonine 194, arginine 208, glutamine 288, threonine 303, and arginine 367. Histidine 105 (proton donor) is an active-site residue. A substrate-binding site is contributed by 363-369 (TTTGRPR). Residues arginine 369, 395 to 397 (KLD), and 478 to 480 (GVG) contribute to the GTP site.

Belongs to the adenylosuccinate synthetase family. Homodimer. Mg(2+) serves as cofactor.

It is found in the plastid. It localises to the chloroplast. The catalysed reaction is IMP + L-aspartate + GTP = N(6)-(1,2-dicarboxyethyl)-AMP + GDP + phosphate + 2 H(+). Its pathway is purine metabolism; AMP biosynthesis via de novo pathway; AMP from IMP: step 1/2. Functionally, plays an important role in the de novo pathway and in the salvage pathway of purine nucleotide biosynthesis. Catalyzes the first committed step in the biosynthesis of AMP from IMP. The sequence is that of Adenylosuccinate synthetase 2, chloroplastic from Sorghum bicolor (Sorghum).